Here is a 290-residue protein sequence, read N- to C-terminus: Arylamine N-acetyltransferase 2 (290 aa).

Residue Cys68 is the Acyl-thioester intermediate of the active site. Residues Ser103 and Gly104 each coordinate CoA. Substrate is bound at residue 106–107; sequence IH. Active-site residues include His107 and Asp122. Residue Tyr208 coordinates CoA.

This sequence belongs to the arylamine N-acetyltransferase family.

It localises to the cytoplasm. The catalysed reaction is an arylamine + acetyl-CoA = an N-acetylarylamine + CoA. The enzyme catalyses an N-hydroxyarylamine + acetyl-CoA = an N-acetoxyarylamine + CoA. Functionally, catalyzes the N- or O-acetylation of various arylamine and heterocyclic amine substrates, and participates in the detoxification of a plethora of hydrazine and arylamine drugs. This is Arylamine N-acetyltransferase 2 (Nat2) from Mus musculus (Mouse).